A 1451-amino-acid chain; its full sequence is Protein clueless (1451 aa).

Disordered regions lie at residues 1–101 (MALE…EYAA) and 264–286 (KKTRPDSVDCTPPEYVTPGVSEP). The segment covering 9-53 (NSNATATGDATATKASSKAKENNNTAGGKKNLNPIPSQQNSNQNL) has biased composition (low complexity). Basic residues predominate over residues 66–75 (GKKKGKKNRN). Phosphoserine is present on Ser270. Residues 424–666 (RAEDAFSSKL…RTFPPDVNFL (243 aa)) enclose the Clu domain. Disordered stretches follow at residues 722–775 (AKKQ…ESKT), 961–1012 (AVSS…SSVS), and 1413–1451 (ANNNGEAEDADPKDVKEQAQAGTQLTNGEKAAATEATSS). Over residues 748 to 758 (GADKTDVKEEK) the composition is skewed to basic and acidic residues. Over residues 969 to 984 (KKRGNGGKHNKHKSSK) the composition is skewed to basic residues. Positions 989–1010 (QQQQQTTGNQNGSSSGTSNGSS) are enriched in low complexity.

It belongs to the CLU family.

The protein resides in the cytoplasm. Functionally, mRNA-binding protein involved in proper cytoplasmic distribution of mitochondria. The sequence is that of Protein clueless from Drosophila yakuba (Fruit fly).